Consider the following 286-residue polypeptide: Beta-lactamase SHV-2 (286 aa).

A signal peptide spans 1–21; the sequence is MRYIRLCIISLLATLPLAVHA. The active-site Acyl-ester intermediate is the serine 66. A disulfide bridge connects residues cysteine 73 and cysteine 119. The active-site Proton acceptor is the glutamate 164. Residue 230-232 coordinates substrate; it reads KTG.

This sequence belongs to the class-A beta-lactamase family.

The enzyme catalyses a beta-lactam + H2O = a substituted beta-amino acid. Its function is as follows. This enzyme hydrolyzes cefotaxime, ceftazidime and other broad spectrum cephalosporins. This is Beta-lactamase SHV-2 (bla) from Escherichia coli.